The chain runs to 115 residues: Somatostatin-2 (115 aa).

The N-terminal stretch at 1-18 is a signal peptide; sequence MKVCRIHCALALLGLALA. A propeptide spanning residues 19–87 is cleaved from the precursor; sequence ICSQGAASQP…KEDLRVELER (69 aa). Cys-104 and Cys-115 are joined by a disulfide.

Belongs to the somatostatin family.

The protein localises to the secreted. Its function is as follows. Somatostatin inhibits the release of somatotropin. This chain is Somatostatin-2 (sst2), found in Oncorhynchus mykiss (Rainbow trout).